The sequence spans 401 residues: Argininosuccinate synthase (401 aa).

Residue 9–17 (AYSGGLDTS) participates in ATP binding. Tyr-86 contacts L-citrulline. An ATP-binding site is contributed by Gly-116. The L-aspartate site is built by Thr-118, Asn-122, and Asp-123. Residue Asn-122 participates in L-citrulline binding. Residues Arg-126, Ser-174, Ser-183, Glu-259, and Tyr-271 each contribute to the L-citrulline site.

Belongs to the argininosuccinate synthase family. Type 1 subfamily. In terms of assembly, homotetramer.

The protein localises to the cytoplasm. The enzyme catalyses L-citrulline + L-aspartate + ATP = 2-(N(omega)-L-arginino)succinate + AMP + diphosphate + H(+). Its pathway is amino-acid biosynthesis; L-arginine biosynthesis; L-arginine from L-ornithine and carbamoyl phosphate: step 2/3. This is Argininosuccinate synthase from Bacillus cereus (strain Q1).